The chain runs to 562 residues: Sulfite reductase [NADPH] hemoprotein beta-component (562 aa).

Cysteine 425, cysteine 431, cysteine 470, and cysteine 474 together coordinate [4Fe-4S] cluster. A siroheme-binding site is contributed by cysteine 474.

It belongs to the nitrite and sulfite reductase 4Fe-4S domain family. In terms of assembly, alpha(8)-beta(8). The alpha component is a flavoprotein, the beta component is a hemoprotein. Requires siroheme as cofactor. The cofactor is [4Fe-4S] cluster.

The catalysed reaction is hydrogen sulfide + 3 NADP(+) + 3 H2O = sulfite + 3 NADPH + 4 H(+). The protein operates within sulfur metabolism; hydrogen sulfide biosynthesis; hydrogen sulfide from sulfite (NADPH route): step 1/1. Functionally, component of the sulfite reductase complex that catalyzes the 6-electron reduction of sulfite to sulfide. This is one of several activities required for the biosynthesis of L-cysteine from sulfate. This Tolumonas auensis (strain DSM 9187 / NBRC 110442 / TA 4) protein is Sulfite reductase [NADPH] hemoprotein beta-component.